The primary structure comprises 537 residues: O-phosphoserine--tRNA(Cys) ligase (537 aa).

Substrate contacts are provided by residues 186-188 (HMT), 231-233 (SAS), 273-274 (YY), and asparagine 317.

Belongs to the class-II aminoacyl-tRNA synthetase family. O-phosphoseryl-tRNA(Cys) synthetase subfamily. In terms of assembly, homotetramer. Interacts with SepCysS.

The catalysed reaction is tRNA(Cys) + O-phospho-L-serine + ATP = O-phospho-L-seryl-tRNA(Cys) + AMP + diphosphate. Catalyzes the attachment of O-phosphoserine (Sep) to tRNA(Cys). The protein is O-phosphoserine--tRNA(Cys) ligase of Methanococcus maripaludis (strain C7 / ATCC BAA-1331).